Reading from the N-terminus, the 141-residue chain is Putative pre-16S rRNA nuclease (141 aa).

Belongs to the YqgF nuclease family.

It localises to the cytoplasm. Its function is as follows. Could be a nuclease involved in processing of the 5'-end of pre-16S rRNA. The protein is Putative pre-16S rRNA nuclease of Histophilus somni (strain 129Pt) (Haemophilus somnus).